Consider the following 258-residue polypeptide: Tryptophan synthase alpha chain (258 aa).

Residues E47 and D58 each act as proton acceptor in the active site.

It belongs to the TrpA family. In terms of assembly, tetramer of two alpha and two beta chains.

The enzyme catalyses (1S,2R)-1-C-(indol-3-yl)glycerol 3-phosphate + L-serine = D-glyceraldehyde 3-phosphate + L-tryptophan + H2O. Its pathway is amino-acid biosynthesis; L-tryptophan biosynthesis; L-tryptophan from chorismate: step 5/5. Its function is as follows. The alpha subunit is responsible for the aldol cleavage of indoleglycerol phosphate to indole and glyceraldehyde 3-phosphate. The polypeptide is Tryptophan synthase alpha chain (Bacillus mycoides (strain KBAB4) (Bacillus weihenstephanensis)).